The chain runs to 81 residues: Toxin MIT1 (81 aa).

5 disulfides stabilise this stretch: cysteine 7–cysteine 19, cysteine 13–cysteine 31, cysteine 18–cysteine 59, cysteine 41–cysteine 67, and cysteine 61–cysteine 77.

The protein belongs to the AVIT (prokineticin) family. In terms of tissue distribution, expressed by the venom gland.

It localises to the secreted. In terms of biological role, potent agonist for both PKR1/PROKR1 and PKR2/PROKR2. Potently contracts gastrointestinal (GI) smooth muscle. In Dendroaspis polylepis polylepis (Black mamba), this protein is Toxin MIT1.